The following is a 203-amino-acid chain: Leucyl/phenylalanyl-tRNA--protein transferase (203 aa).

This sequence belongs to the L/F-transferase family.

It localises to the cytoplasm. The enzyme catalyses N-terminal L-lysyl-[protein] + L-leucyl-tRNA(Leu) = N-terminal L-leucyl-L-lysyl-[protein] + tRNA(Leu) + H(+). It carries out the reaction N-terminal L-arginyl-[protein] + L-leucyl-tRNA(Leu) = N-terminal L-leucyl-L-arginyl-[protein] + tRNA(Leu) + H(+). The catalysed reaction is L-phenylalanyl-tRNA(Phe) + an N-terminal L-alpha-aminoacyl-[protein] = an N-terminal L-phenylalanyl-L-alpha-aminoacyl-[protein] + tRNA(Phe). Functions in the N-end rule pathway of protein degradation where it conjugates Leu, Phe and, less efficiently, Met from aminoacyl-tRNAs to the N-termini of proteins containing an N-terminal arginine or lysine. This chain is Leucyl/phenylalanyl-tRNA--protein transferase, found in Chelativorans sp. (strain BNC1).